A 261-amino-acid chain; its full sequence is Succinate dehydrogenase iron-sulfur subunit (261 aa).

Positions 28 to 119 constitute a 2Fe-2S ferredoxin-type domain; the sequence is RKVKVYRYDP…DIKIYPLPHM (92 aa). Positions 80, 85, and 100 each coordinate [2Fe-2S] cluster. The region spanning 161–191 is the 4Fe-4S ferredoxin-type domain; that stretch reads DREKLDGLYECILCACCSTSCPSYWWNGDKY. The [4Fe-4S] cluster site is built by C171, C174, and C177. C181 provides a ligand contact to [3Fe-4S] cluster. Position 186 (W186) interacts with a ubiquinone. C228 and C234 together coordinate [3Fe-4S] cluster. Residue C238 coordinates [4Fe-4S] cluster.

This sequence belongs to the succinate dehydrogenase/fumarate reductase iron-sulfur protein family. As to quaternary structure, part of an enzyme complex containing four subunits: a flavoprotein, an iron-sulfur, cytochrome b-556, and a hydrophobic anchor protein. [2Fe-2S] cluster is required as a cofactor. It depends on [3Fe-4S] cluster as a cofactor. [4Fe-4S] cluster serves as cofactor.

It catalyses the reaction a quinone + succinate = fumarate + a quinol. It functions in the pathway carbohydrate metabolism; tricarboxylic acid cycle; fumarate from succinate (bacterial route): step 1/1. This chain is Succinate dehydrogenase iron-sulfur subunit (sdhB), found in Rickettsia prowazekii (strain Madrid E).